The primary structure comprises 291 residues: Small ribosomal subunit biogenesis GTPase RsgA (291 aa).

Residues 63-221 enclose the CP-type G domain; sequence HNELKRPPVS…IADTPGFSAL (159 aa). GTP contacts are provided by residues 112–115 and 164–172; these read TKKD and GQSGVGKST. Positions 245, 250, 252, and 258 each coordinate Zn(2+).

Belongs to the TRAFAC class YlqF/YawG GTPase family. RsgA subfamily. As to quaternary structure, monomer. Associates with 30S ribosomal subunit, binds 16S rRNA. Zn(2+) is required as a cofactor.

It is found in the cytoplasm. Functionally, one of several proteins that assist in the late maturation steps of the functional core of the 30S ribosomal subunit. Helps release RbfA from mature subunits. May play a role in the assembly of ribosomal proteins into the subunit. Circularly permuted GTPase that catalyzes slow GTP hydrolysis, GTPase activity is stimulated by the 30S ribosomal subunit. The sequence is that of Small ribosomal subunit biogenesis GTPase RsgA from Staphylococcus haemolyticus (strain JCSC1435).